The primary structure comprises 117 residues: Probable prefoldin subunit 1 (117 aa).

The protein belongs to the prefoldin subunit beta family. In terms of assembly, heterohexamer of two PFD-alpha type and four PFD-beta type subunits.

The protein localises to the cytoplasm. Functionally, binds specifically to cytosolic chaperonin (c-CPN) and transfers target proteins to it. Binds to nascent polypeptide chain and promotes folding in an environment in which there are many competing pathways for nonnative proteins. Has a role in gonadogenesis. This chain is Probable prefoldin subunit 1 (pfd-1), found in Caenorhabditis briggsae.